The following is a 923-amino-acid chain: Leucine--tRNA ligase (923 aa).

Positions 41–52 match the 'HIGH' region motif; the sequence is PYPSGEGLHVGH. Positions 698–702 match the 'KMSKS' region motif; it reads KMSKS. Position 701 (Lys-701) interacts with ATP.

The protein belongs to the class-I aminoacyl-tRNA synthetase family.

The protein localises to the cytoplasm. It catalyses the reaction tRNA(Leu) + L-leucine + ATP = L-leucyl-tRNA(Leu) + AMP + diphosphate. This Amoebophilus asiaticus (strain 5a2) protein is Leucine--tRNA ligase.